The chain runs to 699 residues: SPX domain-containing membrane protein At4g22990 (699 aa).

The SPX domain occupies 2-145 (VAFGKKLKER…GYRFTNYYVK (144 aa)). The next 6 helical transmembrane spans lie at 249-269 (FMSLLLNLVNTFLYMVNTYII), 280-300 (LGAAATVCGVVIGAMAVAQLF), 317-337 (LIFSSIVLFIGNLLYALAFDF), 339-358 (SIAVLLIGRLFCGLGSARAV), 377-397 (AGFVSASALGMACGPALAGLL), and 413-433 (LPGWVMAVAWLIYLVWLAISF). Residues 475–490 (IEEQGEDECDGSEEAS) are compositionally biased toward acidic residues. Residues 475–494 (IEEQGEDECDGSEEASEDSR) form a disordered region. Transmembrane regions (helical) follow at residues 515–535 (LLIYFMLKYAMEILLSESSVI), 546–566 (SVAIFLFCLGLTVLPVNLVVG), 578–598 (ILLVSEIMVCVGILLSFHVVV), 606–626 (VCSGLIMFVSAEVLEGVNLSL), and 671–691 (MLLNVTLLPSLVICVLSIVAT).

The protein belongs to the major facilitator superfamily.

It localises to the membrane. The chain is SPX domain-containing membrane protein At4g22990 from Arabidopsis thaliana (Mouse-ear cress).